We begin with the raw amino-acid sequence, 475 residues long: Ribulose bisphosphate carboxylase large chain (475 aa).

Residues 1 to 2 (MS) constitute a propeptide that is removed on maturation. Position 3 is an N-acetylproline (P3). K14 is modified (N6,N6,N6-trimethyllysine). Substrate contacts are provided by N123 and T173. The Proton acceptor role is filled by K175. Substrate is bound at residue K177. Residues K201, D203, and E204 each coordinate Mg(2+). At K201 the chain carries N6-carboxylysine. The active-site Proton acceptor is the H294. 3 residues coordinate substrate: R295, H327, and S379.

This sequence belongs to the RuBisCO large chain family. Type I subfamily. Heterohexadecamer of 8 large chains and 8 small chains; disulfide-linked. The disulfide link is formed within the large subunit homodimers. Mg(2+) serves as cofactor. Post-translationally, the disulfide bond which can form in the large chain dimeric partners within the hexadecamer appears to be associated with oxidative stress and protein turnover.

The protein localises to the plastid. Its subcellular location is the chloroplast. The enzyme catalyses 2 (2R)-3-phosphoglycerate + 2 H(+) = D-ribulose 1,5-bisphosphate + CO2 + H2O. The catalysed reaction is D-ribulose 1,5-bisphosphate + O2 = 2-phosphoglycolate + (2R)-3-phosphoglycerate + 2 H(+). In terms of biological role, ruBisCO catalyzes two reactions: the carboxylation of D-ribulose 1,5-bisphosphate, the primary event in carbon dioxide fixation, as well as the oxidative fragmentation of the pentose substrate in the photorespiration process. Both reactions occur simultaneously and in competition at the same active site. The protein is Ribulose bisphosphate carboxylase large chain of Platanus occidentalis (Sycamore).